A 147-amino-acid chain; its full sequence is Hemoglobin subunit beta-2 (147 aa).

The Globin domain occupies 3–147; the sequence is EWTDSERAII…VVSALGRQYH (145 aa). The heme b site is built by His-64 and His-93.

This sequence belongs to the globin family. In terms of assembly, hb 3 is a heterotetramer of two alpha-2 and two beta-2 chains. Red blood cells.

In terms of biological role, involved in oxygen transport from gills to the various peripheral tissues. The protein is Hemoglobin subunit beta-2 (hbb2) of Boreogadus saida (Polar cod).